Here is a 177-residue protein sequence, read N- to C-terminus: Large ribosomal subunit protein uL6 (177 aa).

The protein belongs to the universal ribosomal protein uL6 family. Part of the 50S ribosomal subunit.

In terms of biological role, this protein binds to the 23S rRNA, and is important in its secondary structure. It is located near the subunit interface in the base of the L7/L12 stalk, and near the tRNA binding site of the peptidyltransferase center. The polypeptide is Large ribosomal subunit protein uL6 (Acinetobacter baumannii (strain SDF)).